The chain runs to 229 residues: Cytidylate kinase (229 aa).

12-20 (GPSGSGKGT) is an ATP binding site.

It belongs to the cytidylate kinase family. Type 1 subfamily.

Its subcellular location is the cytoplasm. It carries out the reaction CMP + ATP = CDP + ADP. The enzyme catalyses dCMP + ATP = dCDP + ADP. The polypeptide is Cytidylate kinase (Azotobacter vinelandii (strain DJ / ATCC BAA-1303)).